We begin with the raw amino-acid sequence, 228 residues long: Small ribosomal subunit protein uS7m (228 aa).

The transit peptide at 1 to 33 (MAASVRHLLKPWTPSLCLMRWSRYNPYYLDPEP) directs the protein to the mitochondrion.

Belongs to the universal ribosomal protein uS7 family. As to quaternary structure, component of the mitochondrial ribosome small subunit (28S) which comprises a 12S rRNA and about 30 distinct proteins.

The protein localises to the mitochondrion. The protein is Small ribosomal subunit protein uS7m (mrps7) of Danio rerio (Zebrafish).